We begin with the raw amino-acid sequence, 70 residues long: Large ribosomal subunit protein bL31 (70 aa).

The Zn(2+) site is built by cysteine 16, cysteine 18, cysteine 37, and cysteine 40. A disordered region spans residues 48 to 70 (QRQASSGGRVDKFNKRFGALGSK).

Belongs to the bacterial ribosomal protein bL31 family. Type A subfamily. As to quaternary structure, part of the 50S ribosomal subunit. Zn(2+) is required as a cofactor.

In terms of biological role, binds the 23S rRNA. The chain is Large ribosomal subunit protein bL31 from Photobacterium profundum (strain SS9).